The chain runs to 788 residues: Mediator of RNA polymerase II transcription subunit 15 (788 aa).

Positions 9-73 (DWRSTAFRQK…IHFRDIHNKK (65 aa)) are interaction with SREBF1. Disordered stretches follow at residues 95 to 139 (GAAG…MAPH) and 260 to 329 (QQQA…PLVS). The segment covering 108-117 (QSLGGMGSLG) has biased composition (gly residues). Low complexity predominate over residues 260–269 (QQQALQAQPP). Positions 270–284 (IQQPPMQQPQPPPSQ) are enriched in pro residues. 2 stretches are compositionally biased toward low complexity: residues 285–294 (ALPQQLQQMH) and 309–329 (PVAQ…PLVS). At Arg-349 the chain carries Asymmetric dimethylarginine. Positions 412–530 (SSSIPLGRQP…PAGSSQAEEQ (119 aa)) are disordered. Residues 426 to 446 (SQSSLPMLSSPSPGQQVQTPQ) show a composition bias toward low complexity. Over residues 447 to 459 (SMPPPPQPSPQPG) the composition is skewed to pro residues. Residues 460-482 (QPSSQPNSNVSSGPAPSPSSFLP) are compositionally biased toward low complexity. 2 stretches are compositionally biased toward polar residues: residues 493–503 (VTARTPQNFSV) and 511–529 (TPVN…QAEE). Positions 547 to 564 (RRMINKIDKNEDRKKDLS) match the Nuclear localization signal motif. Thr-603 carries the post-translational modification Phosphothreonine.

It belongs to the Mediator complex subunit 15 family. Component of the Mediator complex, which is composed of MED1, MED4, MED6, MED7, MED8, MED9, MED10, MED11, MED12, MED13, MED13L, MED14, MED15, MED16, MED17, MED18, MED19, MED20, MED21, MED22, MED23, MED24, MED25, MED26, MED27, MED29, MED30, MED31, CCNC, CDK8 and CDC2L6/CDK11. The MED12, MED13, CCNC and CDK8 subunits form a distinct module termed the CDK8 module. Mediator containing the CDK8 module is less active than Mediator lacking this module in supporting transcriptional activation. Individual preparations of the Mediator complex lacking one or more distinct subunits have been variously termed ARC, CRSP, DRIP, PC2, SMCC and TRAP. Interacts with SMAD2, SMAD3, SREBF1 and SREBF2. Interacts with WWTR1. Interacts with TRIM11. Post-translationally, ubiquitinated by TRIM11, leading to proteasomal degradation. As to expression, expressed in all tissues examined, including heart, brain, lung, spleen, thymus, pancreas, blood leukocyte and placenta. However, the level of expression varied, with highest expression in the placenta and peripheral blood and lowest in the pancreas and kidney.

The protein localises to the cytoplasm. Its subcellular location is the nucleus. In terms of biological role, component of the Mediator complex, a coactivator involved in the regulated transcription of nearly all RNA polymerase II-dependent genes. Mediator functions as a bridge to convey information from gene-specific regulatory proteins to the basal RNA polymerase II transcription machinery. Mediator is recruited to promoters by direct interactions with regulatory proteins and serves as a scaffold for the assembly of a functional preinitiation complex with RNA polymerase II and the general transcription factors. Required for cholesterol-dependent gene regulation. Positively regulates the Nodal signaling pathway. The sequence is that of Mediator of RNA polymerase II transcription subunit 15 (MED15) from Homo sapiens (Human).